A 314-amino-acid polypeptide reads, in one-letter code: tRNA dimethylallyltransferase (314 aa).

The interval 1–25 (MAEEPQRSPAPTSPFAFTVPSNSLS) is disordered. 40 to 47 (GPTASGKS) contributes to the ATP binding site. 42–47 (TASGKS) serves as a coordination point for substrate.

The protein belongs to the IPP transferase family. Monomer. Requires Mg(2+) as cofactor.

The enzyme catalyses adenosine(37) in tRNA + dimethylallyl diphosphate = N(6)-dimethylallyladenosine(37) in tRNA + diphosphate. In terms of biological role, catalyzes the transfer of a dimethylallyl group onto the adenine at position 37 in tRNAs that read codons beginning with uridine, leading to the formation of N6-(dimethylallyl)adenosine (i(6)A). The chain is tRNA dimethylallyltransferase from Cereibacter sphaeroides (strain ATCC 17023 / DSM 158 / JCM 6121 / CCUG 31486 / LMG 2827 / NBRC 12203 / NCIMB 8253 / ATH 2.4.1.) (Rhodobacter sphaeroides).